The primary structure comprises 129 residues: Protein Turandot A (129 aa).

Residues 1 to 21 (MNSLTGFMCCALLLISPLCMG) form the signal peptide. Asn-49 carries an N-linked (GlcNAc...) asparagine glycan.

It belongs to the Turandot family.

The protein localises to the secreted. Functionally, a humoral factor that plays a role in stress tolerance; gives increased resistance to the lethal effects of bacterial challenge and stress. Regulated by the JAK/STAT pathway and NF-KB-like Relish pathway in the fat body, upd3 in the hemocytes and Mekk1 in response to septic injury and consequent immune response. This Drosophila yakuba (Fruit fly) protein is Protein Turandot A (TotA).